Consider the following 156-residue polypeptide: RING finger protein 224 (156 aa).

An RING-type zinc finger spans residues 24 to 71; it reads CIICCSAYDLSGHLPRRLYCGHTFCQACVRRLDTPAPEQRWIPCPQCR.

The polypeptide is RING finger protein 224 (RNF224) (Homo sapiens (Human)).